The following is a 338-amino-acid chain: Microtubule-associated protein RP/EB family member 2 (338 aa).

Positions 1-21 are disordered; sequence MPGPTQALSPNGENNNDIIQD. The region spanning 57–159 is the Calponin-homology (CH) domain; that stretch reads TMSRHDIIAW…FIQWFKKFFD (103 aa). Disordered stretches follow at residues 171–241 and 300–338; these read EARQ…KDLE and SEEHESHTEEHEGEEQVHEQPSSRRSTDSRSVSDNFHFV. Positions 200–234 are enriched in low complexity; that stretch reads SPTAGAAKSSPASKPGSTPSRPSSAKKAAPSSSAS. The region spanning 236 to 306 is the EB1 C-terminal domain; that stretch reads SDKDLETQVI…LYASEEHESH (71 aa). Positions 300-327 are enriched in basic and acidic residues; sequence SEEHESHTEEHEGEEQVHEQPSSRRSTD. Residues 328–338 are compositionally biased toward low complexity; it reads SRSVSDNFHFV.

The protein belongs to the MAPRE family.

Its subcellular location is the cytoplasm. It localises to the cytoskeleton. In terms of biological role, may be involved in microtubule polymerization, and spindle function by stabilizing microtubules and anchoring them at centrosomes. The sequence is that of Microtubule-associated protein RP/EB family member 2 (MAPRE2) from Gallus gallus (Chicken).